We begin with the raw amino-acid sequence, 1253 residues long: Guanine nucleotide exchange factor SDC25 (1253 aa).

Positions 26-98 constitute an SH3 domain; the sequence is QPIDVVECTY…PPSFTRSILN (73 aa). The interval 624-649 is disordered; that stretch reads LNLDNAKDKKNGSQNTDIQEEEDEYE. The 133-residue stretch at 782–914 folds into the N-terminal Ras-GEF domain; the sequence is GPIVRIKGGS…ELLKEVNQKF (133 aa). The Ras-GEF domain maps to 952-1199; it reads VDPVLFATQL…QYQLSLIIEP (248 aa). The tract at residues 1202–1253 is disordered; the sequence is RKKVVPNSNSNNKSQEKSRDDQTDEGKTSTKKDRFPKFQLHKTKKKAPKVSK. Residues 1215–1237 show a composition bias toward basic and acidic residues; it reads SQEKSRDDQTDEGKTSTKKDRFP. Positions 1240–1253 are enriched in basic residues; the sequence is QLHKTKKKAPKVSK.

In terms of biological role, promotes the exchange of Ras-bound GDP by GTP. In Saccharomyces cerevisiae (Baker's yeast), this protein is Guanine nucleotide exchange factor SDC25 (SDC25).